Consider the following 217-residue polypeptide: Large ribosomal subunit protein uL1A (217 aa).

Ser2 carries the N-acetylserine modification. Lys47 is modified (N6-methyllysine; by RKM5). Phosphoserine occurs at positions 79 and 86.

Belongs to the universal ribosomal protein uL1 family. As to quaternary structure, component of the large ribosomal subunit (LSU). Mature yeast ribosomes consist of a small (40S) and a large (60S) subunit. The 40S small subunit contains 1 molecule of ribosomal RNA (18S rRNA) and 33 different proteins (encoded by 57 genes). The large 60S subunit contains 3 rRNA molecules (25S, 5.8S and 5S rRNA) and 46 different proteins (encoded by 81 genes). uL1 forms part of the L1 stalk. Post-translationally, N-terminally acetylated by acetyltransferase NatA.

It is found in the cytoplasm. Component of the ribosome, a large ribonucleoprotein complex responsible for the synthesis of proteins in the cell. The small ribosomal subunit (SSU) binds messenger RNAs (mRNAs) and translates the encoded message by selecting cognate aminoacyl-transfer RNA (tRNA) molecules. The large subunit (LSU) contains the ribosomal catalytic site termed the peptidyl transferase center (PTC), which catalyzes the formation of peptide bonds, thereby polymerizing the amino acids delivered by tRNAs into a polypeptide chain. The nascent polypeptides leave the ribosome through a tunnel in the LSU and interact with protein factors that function in enzymatic processing, targeting, and the membrane insertion of nascent chains at the exit of the ribosomal tunnel. uL1 forms part of the L1 stalk, a mobile element that plays a role in evacuating the exit-site tRNA. The protein is Large ribosomal subunit protein uL1A of Saccharomyces cerevisiae (strain ATCC 204508 / S288c) (Baker's yeast).